The chain runs to 209 residues: Geminin (209 aa).

The disordered stretch occupies residues 1–79 (MNPSMKQKQE…PESSENKNLG (79 aa)). Basic and acidic residues predominate over residues 7 to 16 (QKQEEIKENI). Lys27 is subject to N6-acetyllysine. A phosphoserine mark is found at Ser34, Ser36, Ser49, Ser63, and Ser64. The segment at 82–161 (TQESFDLMIK…AELIERLNGE (80 aa)) is necessary and sufficient for interaction with IDAS and CDT1. The stretch at 94–144 (PSSQYWKEVAEKRRKALYEALKENEKLHKEIEQKDNEIARLKKENKELAEV) forms a coiled coil. Residues 164 to 209 (DNFESLDNQEFDSEEETVEDSLVEDSEIGTCAEGTVSSSTDAKPCI) form a disordered region. Positions 170–190 (DNQEFDSEEETVEDSLVEDSE) are homeodomain binding. The span at 170 to 190 (DNQEFDSEEETVEDSLVEDSE) shows a compositional bias: acidic residues. Ser184 carries the phosphoserine; by CK2 modification. Positions 198 to 209 (TVSSSTDAKPCI) are enriched in polar residues.

Belongs to the geminin family. As to quaternary structure, homotetramer. Interacts with CDT1; this inhibits binding of the MCM complex to origins of replication. The complex with CDT1 exists in two forms, a 'permissive' heterotrimer and an 'inhibitory' heterohexamer. Interacts (via coiled-coil domain) with IDAS (via coiled-coil domain); this targets GMNN to the nucleus. The heterodimer formed by GMNN and MCIDAS has much lower affinity for CDT1 than the GMNN homodimer. Interacts with a subset of Hox proteins, affinity increasing from anterior to posterior types, the strongest interaction being with HOXB1, HOXC9 and HOXD10. Interacts with LRWD1 from G1/S to mitosis. In terms of processing, phosphorylated during mitosis. Phosphorylation at Ser-184 by CK2 results in enhanced binding to Hox proteins and more potent inhibitory effect on Hox transcriptional activity.

It is found in the cytoplasm. It localises to the nucleus. Its function is as follows. Inhibits DNA replication by preventing the incorporation of MCM complex into pre-replication complex (pre-RC). It is degraded during the mitotic phase of the cell cycle. Its destruction at the metaphase-anaphase transition permits replication in the succeeding cell cycle. Inhibits histone acetyltransferase activity of KAT7/HBO1 in a CDT1-dependent manner, inhibiting histone H4 acetylation and DNA replication licensing. Inhibits the transcriptional activity of a subset of Hox proteins, enrolling them in cell proliferative control. The polypeptide is Geminin (GMNN) (Homo sapiens (Human)).